The sequence spans 163 residues: 6,7-dimethyl-8-ribityllumazine synthase 1 (163 aa).

Residues phenylalanine 27, alanine 58–glutamate 60, and cysteine 87–valine 89 each bind 5-amino-6-(D-ribitylamino)uracil. (2S)-2-hydroxy-3-oxobutyl phosphate is bound at residue glutamate 92–threonine 93. Residue histidine 95 is the Proton donor of the active site. Asparagine 120 lines the 5-amino-6-(D-ribitylamino)uracil pocket. Arginine 134 serves as a coordination point for (2S)-2-hydroxy-3-oxobutyl phosphate.

The protein belongs to the DMRL synthase family.

It catalyses the reaction (2S)-2-hydroxy-3-oxobutyl phosphate + 5-amino-6-(D-ribitylamino)uracil = 6,7-dimethyl-8-(1-D-ribityl)lumazine + phosphate + 2 H2O + H(+). It functions in the pathway cofactor biosynthesis; riboflavin biosynthesis; riboflavin from 2-hydroxy-3-oxobutyl phosphate and 5-amino-6-(D-ribitylamino)uracil: step 1/2. Functionally, catalyzes the formation of 6,7-dimethyl-8-ribityllumazine by condensation of 5-amino-6-(D-ribitylamino)uracil with 3,4-dihydroxy-2-butanone 4-phosphate. This is the penultimate step in the biosynthesis of riboflavin. This chain is 6,7-dimethyl-8-ribityllumazine synthase 1, found in Rhodopseudomonas palustris (strain ATCC BAA-98 / CGA009).